Consider the following 106-residue polypeptide: Acidic phospholipase A2 PhTX-III (106 aa).

Ca(2+)-binding residues include Tyr23, Gly25, and Gly27. Disulfide bonds link Cys24/Cys40, Cys39/Cys75, Cys45/Cys106, Cys46/Cys68, and Cys55/Cys66. His43 is an active-site residue. Residue Asp44 participates in Ca(2+) binding. The active site involves Asp69.

Ca(2+) is required as a cofactor. As to expression, expressed by the venom gland.

The protein localises to the secreted. The catalysed reaction is a 1,2-diacyl-sn-glycero-3-phosphocholine + H2O = a 1-acyl-sn-glycero-3-phosphocholine + a fatty acid + H(+). With respect to regulation, partially inhibited by magnesium ions and completely inhibited by zinc ions These divalent cations may act as competitive antagonists of the cofactor. Its function is as follows. Snake venom phospholipase A2 (PLA2) that induces inflammatory response, with local edema and release of cytokines IL-1 alpha, IL-6 and TNF-alpha. Does not exhibit myotoxic, anticoagulant and antibacterial effects. Release of pro-inflammatory cytokines may be due to mast cell degranulation, and edema may be induced by arachidonic acid that results from the PLA2 catalytic activity. PLA2 catalyzes the calcium-dependent hydrolysis of the 2-acyl groups in 3-sn-phosphoglycerides. In Bothrocophias hyoprora (Amazonian hognose viper), this protein is Acidic phospholipase A2 PhTX-III.